The sequence spans 976 residues: MELWAARACFVLLWGCALAPATAAQGKEVVLLDFAAAGGELGWLTHPYGKGWDLMQNIMNDMPIYMYSVCNVMSGDQDNWLRTNWVYRGEAERIFIELKFTVRDCNSFPGGASSCKETFNLYYAESDLDYGTNFQKRLFTKIDTIAPDEITVSSDFEARHVKLNVEERSVGPLTRKGFYLAFQDIGACVALLSVRVYYKKCPELLQSLARFPETIAGSDAPSLATVAGTCVDHAVVPPGGEEPRMHCAVDGEWLVPIGQCLCQAGYEKVEDACQACSPGFFKFEVSESPCLECPEHTLPSPEGATSCECEEGFFRAPQDPMSMPCTRPPSAPHYLTAVGMGAKVELRWTPPQDSGGREDIVYSVTCEQCWPESGECGPCESSVRYSEPPHGLTRTSVTVSDLEPHMNYTFTVEARNGVSGLVTSRSFRTASVSINQTEPPKVRLEGRSTTSLSVSWSIPPPQQSRVWKYEVTYRKKGDSNSYNVRRTEGFSVTLDDLAPDTTYLVQVQALTQEGQGAGSKVHEFQTLSPEGSGSLAVIGGVAVCVVLLLLLAGAGFFIHRRRKNLRARQSPEDVYFSKSEQLKPLKTYVDPHTYEDPNQAVLKFTTEIHPSCVTRQKVIGAGEFGEVYKGTLKTSSGKKEVPVAIKTLKAGYTEKQRVDFLGEAGIMGQFSHHNIIRLEGVISKYKPMMIITEFMENGALDKFLREKDGEFSVLQLVGMLRGIAAGMKYLANMNYVHRDLAARNILVNSNLVCKVSDFGLSRVLEDDPEATYTTSGGKIPIRWTAPEAISYRKFTSASDVWSFGIVMWEVMTYGERPYWELSNHEVMKAINDGFRLPTPMDCPSAIYQLMMQCWQQERARRPKFADIVSILDKLIRAPDSLKTLADFDPRVSIRLPSTSGSEGVPFRTVSEWLESIKMQQYTEHFMAAGYTAIEKVVQMTNDDIKRIGVRLPGHQKRIAYSLLGLKDQVNTVGIPI.

An N-terminal signal peptide occupies residues 1 to 23 (MELWAARACFVLLWGCALAPATA). Residues 1 to 206 (MELWAARACF…YYKKCPELLQ (206 aa)) form a mediates interaction with CLDN4 region. Topologically, residues 25 to 537 (QGKEVVLLDF…SPEGSGSLAV (513 aa)) are extracellular. The region spanning 28 to 206 (EVVLLDFAAA…YYKKCPELLQ (179 aa)) is the Eph LBD domain. Cystine bridges form between C70–C188 and C105–C115. Residues 328-432 (PPSAPHYLTA…TSRSFRTASV (105 aa)) form the Fibronectin type-III 1 domain. Residues N407 and N435 are each glycosylated (N-linked (GlcNAc...) asparagine). Residues 438–529 (EPPKVRLEGR…KVHEFQTLSP (92 aa)) enclose the Fibronectin type-III 2 domain. Residues 538-558 (IGGVAVCVVLLLLLAGAGFFI) traverse the membrane as a helical segment. The Cytoplasmic segment spans residues 559-976 (HRRRKNLRAR…DQVNTVGIPI (418 aa)). Residue S570 is modified to Phosphoserine. Y575 bears the Phosphotyrosine mark. At S579 the chain carries Phosphoserine. A Phosphotyrosine; by autocatalysis modification is found at Y588. Y594 carries the post-translational modification Phosphotyrosine. A mediates interaction with ARHGEF16 region spans residues 606–906 (TEIHPSCVTR…STSGSEGVPF (301 aa)). The region spanning 613–875 (VTRQKVIGAG…DIVSILDKLI (263 aa)) is the Protein kinase domain. 619–627 (IGAGEFGEV) contacts ATP. Position 628 is a phosphotyrosine (Y628). K646 serves as a coordination point for ATP. At T647 the chain carries Phosphothreonine. The residue at position 735 (Y735) is a Phosphotyrosine; by autocatalysis. D739 acts as the Proton acceptor in catalysis. Position 772 is a phosphotyrosine (Y772). S869, S892, S897, and S901 each carry phosphoserine. The negatively regulates interaction with ARHGEF16 stretch occupies residues 886 to 976 (DFDPRVSIRL…DQVNTVGIPI (91 aa)). An SAM domain is found at 904-968 (VPFRTVSEWL…AYSLLGLKDQ (65 aa)). A Phosphotyrosine; by autocatalysis modification is found at Y921. At Y930 the chain carries Phosphotyrosine. Residues 974-976 (IPI) carry the PDZ-binding motif.

The protein belongs to the protein kinase superfamily. Tyr protein kinase family. Ephrin receptor subfamily. As to quaternary structure, homodimer. Interacts with SLA. Interacts (phosphorylated form) with VAV2, VAV3 and PI3-kinase p85 subunit (PIK3R1, PIK3R2 or PIK3R3); critical for the EFNA1-induced activation of RAC1 which stimulates cell migration. Interacts with INPPL1; regulates activated EPHA2 endocytosis and degradation. Interacts (inactivated form) with PTK2/FAK1 and interacts (EFNA1 ligand-activated form) with PTPN11; regulates integrin-mediated adhesion. Interacts with ARHGEF16, DOCK4 and ELMO2; mediates ligand-independent activation of RAC1 which stimulates cell migration. Interacts with CLDN4; phosphorylates CLDN4 and may regulate tight junctions. Interacts with ACP1. Interacts with ANKS1A. Interacts with CEMIP. Interacts with NCK1; may regulate EPHA2 activity in cell migration and adhesion. Interacts with TIMD4. In terms of processing, autophosphorylates. Phosphorylated on tyrosine upon binding and activation by EFNA1. Phosphorylated residues Tyr-588 and Tyr-594 are required for binding VAV2 and VAV3 while phosphorylated residues Tyr-735 and Tyr-930 are required for binding PI3-kinase p85 subunit (PIK3R1, PIK3R2 or PIK3R3). These phosphorylated residues are critical for recruitment of VAV2 and VAV3 and PI3-kinase p85 subunit which transduce downstream signaling to activate RAC1 GTPase and cell migration. Dephosphorylation of Tyr-930 by PTPRF prevents the interaction of EPHA2 with NCK1. Phosphorylated at Ser-897 by PKB; serum-induced phosphorylation which targets EPHA2 to the cell leading edge and stimulates cell migration. Phosphorylation by PKB is inhibited by EFNA1-activated EPHA2 which regulates PKB activity via a reciprocal regulatory loop. Phosphorylated at Ser-897 in response to TNF by RPS6KA1 and RPS6KA3; RPS6KA-EPHA2 signaling pathway controls cell migration. Phosphorylated at Ser-897 by PKA; blocks cell retraction induced by EPHA2 kinase activity. Dephosphorylated by ACP1. Ubiquitinated by CHIP/STUB1. Ubiquitination is regulated by the HSP90 chaperone and regulates the receptor stability and activity through proteasomal degradation. ANKS1A prevents ubiquitination and degradation.

The protein localises to the cell membrane. The protein resides in the cell projection. Its subcellular location is the ruffle membrane. It is found in the lamellipodium membrane. It localises to the cell junction. The protein localises to the focal adhesion. It catalyses the reaction L-tyrosyl-[protein] + ATP = O-phospho-L-tyrosyl-[protein] + ADP + H(+). Functionally, receptor tyrosine kinase which binds promiscuously membrane-bound ephrin-A family ligands residing on adjacent cells, leading to contact-dependent bidirectional signaling into neighboring cells. The signaling pathway downstream of the receptor is referred to as forward signaling while the signaling pathway downstream of the ephrin ligand is referred to as reverse signaling. Activated by the ligand ephrin-A1/EFNA1 regulates migration, integrin-mediated adhesion, proliferation and differentiation of cells. Regulates cell adhesion and differentiation through DSG1/desmoglein-1 and inhibition of the ERK1/ERK2 signaling pathway. May also participate in UV radiation-induced apoptosis and have a ligand-independent stimulatory effect on chemotactic cell migration. During development, may function in distinctive aspects of pattern formation and subsequently in development of several fetal tissues. Involved for instance in angiogenesis, in early hindbrain development and epithelial proliferation and branching morphogenesis during mammary gland development. Engaged by the ligand ephrin-A5/EFNA5 may regulate lens fiber cells shape and interactions and be important for lens transparency development and maintenance. With ephrin-A2/EFNA2 may play a role in bone remodeling through regulation of osteoclastogenesis and osteoblastogenesis. This is Ephrin type-A receptor 2 (EPHA2) from Macaca fascicularis (Crab-eating macaque).